Consider the following 352-residue polypeptide: MQEEKSKEDHSRLINVTAKDLTVRNRRLVEVPYTATLSHAMNTLVANSISALPVAAPPGHWIGAGGSMIMESDKQTGVVRKHYIGILTMLDILAHIAGEDSNLSDLDRKMSSQVSSIIGHCLEGLSLWTLNPNTSVLECMEVFSKGIHRALVPVESSIESNNTIAGVELIESASAYKMLTQMDLLRFLKDHHFDDLKTVLSRSISDLGAVNDSVYAITERTTVSNAINVMKGALLNAVPIVHAPDIAQEDHLQLVNGRHRKVIGTFSATDLKGCRLPELQTWLPLTALEFTEKTSGKEREVVSCGVESTMEEAIEKVVTRGVHRVWVMDQQGLLQGVVSLTDIIRSLRSTLS.

CBS domains are found at residues 24 to 106 (RNRR…LSDL), 122 to 196 (LEGL…FDDL), 210 to 281 (VNDS…ELQT), and 297 to 352 (KERE…STLS).

The protein belongs to the 5'-AMP-activated protein kinase gamma subunit family. As to expression, expressed highly in rosette leaves, cauline leaves, open flowers, developing siliques and dry seeds, but at a low level in stems and floral buds.

Its function is as follows. Plays redundant role with PV42b in regulating male gametogenesis and pollen tube guidance. The polypeptide is SNF1-related protein kinase regulatory subunit gamma-like PV42a (PV42A) (Arabidopsis thaliana (Mouse-ear cress)).